Consider the following 873-residue polypeptide: Protein SEY1 (873 aa).

Over 1-750 (MVANGHFFAG…KRSAIGGITQ (750 aa)) the chain is Cytoplasmic. One can recognise a GB1/RHD3-type G domain in the interval 50–308 (GFNYHLISVF…IPADGFAVYA (259 aa)). 60 to 67 (GSQSTGKS) serves as a coordination point for GTP. Positions 677-701 (LDKWIGHTPSSATPADEEDLTPIGG) are disordered. Residues 691-701 (ADEEDLTPIGG) are compositionally biased toward acidic residues. A helical membrane pass occupies residues 751–771 (VPLYFYGLLLALGWNEIVAVL). Residues 772-774 (RNP) are Lumenal-facing. Residues 775–795 (AYFLLLFVCAVTAYVTYQLNL) form a helical membrane-spanning segment. Residues 796–873 (WGPIIKMTEA…IDDADDDDDF (78 aa)) are Cytoplasmic-facing. The segment at 841 to 873 (EGYDMSNMKNRKSAGGYQNNRSHIDDADDDDDF) is disordered.

Belongs to the TRAFAC class dynamin-like GTPase superfamily. GB1/RHD3 GTPase family. RHD3 subfamily.

It localises to the endoplasmic reticulum membrane. Cooperates with the reticulon proteins and tubule-shaping DP1 family proteins to generate and maintain the structure of the tubular endoplasmic reticulum network. Has GTPase activity, which is required for its function in ER organization. The protein is Protein SEY1 of Paracoccidioides lutzii (strain ATCC MYA-826 / Pb01) (Paracoccidioides brasiliensis).